We begin with the raw amino-acid sequence, 234 residues long: MRMIKFLLLAILLAPFVAHSSGQEVKLDKAPIDRADKESLQRGAKGFVEYCLTCHGANFMRFNRHHDIGMSEDDIRADLIHTGQKTGDLMEAAMRKKEAEGWFGVVPPDLSVIARARGADWLYTYLRTFYQDTSTYSGWNNLIFDKVAMPHVLHHLQGWQVLEPGTGNLVQTKPGTMTKEEYDRFVADLVNYMVYLGEPHAPYRRELGITVLLFLFGMLGLTYLLKKEYWRDIH.

The signal sequence occupies residues 1-20 (MRMIKFLLLAILLAPFVAHS). The 156-residue stretch at 38 to 193 (ESLQRGAKGF…RFVADLVNYM (156 aa)) folds into the Cytochrome c domain. Residues C51, C54, and H55 each contribute to the heme c site. A helical membrane pass occupies residues 206–226 (ELGITVLLFLFGMLGLTYLLK).

It belongs to the cytochrome c family. As to quaternary structure, the soluble ammonia monooxygenase is a nonamer composed of three alpha subunits (AmoA), three beta subunits (AmoB) and three gamma subunits (Cytochrome c1 PetC). The cofactor is heme c.

Its subcellular location is the cell membrane. The protein resides in the cytoplasm. Its function is as follows. Part of the ammonia monooxygenase complex, which catalyzes the oxidation of ammonia to hydroxylamine, the first reaction in the process of ammonia oxidation to nitrite. The chain is Ammonia monooxygenase gamma subunit from Nitrosomonas europaea (strain ATCC 19718 / CIP 103999 / KCTC 2705 / NBRC 14298).